A 320-amino-acid polypeptide reads, in one-letter code: Cytochrome f (320 aa).

Positions 1-35 (MQTRNAFSCIKEGITRSISISVMIYIIIRAPFSNA) are cleaved as a signal peptide. The heme site is built by Tyr36, Cys56, Cys59, and His60. The helical transmembrane segment at 286–306 (VQGLLFFLASIILAQIFLVLK) threads the bilayer.

This sequence belongs to the cytochrome f family. As to quaternary structure, the 4 large subunits of the cytochrome b6-f complex are cytochrome b6, subunit IV (17 kDa polypeptide, petD), cytochrome f and the Rieske protein, while the 4 small subunits are PetG, PetL, PetM and PetN. The complex functions as a dimer. The cofactor is heme.

It localises to the plastid. Its subcellular location is the chloroplast thylakoid membrane. In terms of biological role, component of the cytochrome b6-f complex, which mediates electron transfer between photosystem II (PSII) and photosystem I (PSI), cyclic electron flow around PSI, and state transitions. The chain is Cytochrome f from Phaseolus vulgaris (Kidney bean).